Consider the following 114-residue polypeptide: Flagellar hook-basal body complex protein FliE (114 aa).

This sequence belongs to the FliE family.

It localises to the bacterial flagellum basal body. In Burkholderia cenocepacia (strain ATCC BAA-245 / DSM 16553 / LMG 16656 / NCTC 13227 / J2315 / CF5610) (Burkholderia cepacia (strain J2315)), this protein is Flagellar hook-basal body complex protein FliE.